The primary structure comprises 561 residues: Shugoshin 1 (561 aa).

Residues 1–176 form a necessary for interaction with PPP2CA and PPP2R1A region; that stretch reads MAKERCLKKS…DTLGVDFDSG (176 aa). A coiled-coil region spans residues 7-89; it reads LKKSFQDSLE…DIILQLRKEC (83 aa). S14 carries the post-translational modification Phosphoserine; by NEK2. A D-box 1 motif is present at residues 192-200; sequence RSSLKKHCN. Residue S256 is modified to Phosphoserine. 2 disordered regions span residues 260 to 331 and 348 to 441; these read IQPG…SVSS and FRQK…HLSL. Over residues 267-296 the composition is skewed to basic and acidic residues; the sequence is KTKEDILESKSEQTKSKQRDTQERKREEKR. The stretch at 273 to 313 forms a coiled coil; the sequence is LESKSEQTKSKQRDTQERKREEKRKANRRKSKRMSKYKENK. Residues 297 to 307 show a composition bias toward basic residues; it reads KANRRKSKRMS. Basic and acidic residues predominate over residues 308–318; the sequence is KYKENKSENKK. The short motif at 310–312 is the KEN box element; the sequence is KEN. Residues 364–375 are compositionally biased toward low complexity; the sequence is SEVSLCESSGSG. Residues 388–398 are compositionally biased toward polar residues; the sequence is YIQNPTSNSDR. The segment covering 410–421 has biased composition (basic and acidic residues); that stretch reads KYTDEKETEGSK. Positions 422-433 are enriched in low complexity; sequence PTKTPTTTPPET. S436 is modified (phosphoserine). Residues 438-446 carry the D-box 2 motif; the sequence is HLSLKDITN. The PXVXL/I motif motif lies at 451–455; sequence PVVKI. Residues 457–465 carry the D-box 3 motif; sequence RLSLSPKKN. S507 is modified (phosphoserine; by NEK2).

The protein belongs to the shugoshin family. Interacts with PPP2CA (or PPP2CB), PPP2R1B, PPP2R5A, PPP2R5B, PPP2R5C, PPP2R5D, PPP2R5E, SET, LRRC59, RBM10 (or RBM5), RPL10A, RPL28, RPL7, RPL7A and RPLP1. Interaction with protein phosphatase 2A occurs most probably through direct binding to the regulatory B56 subunits: PPP2R1B, PPP2R5A, PPP2R5B, PPP2R5C, PPP2R5D, PPP2R5E. Interacts with PPP2R1A and NEK2. Isoform 3 interacts with PLK1. Interacts with CDCA8. Post-translationally, ubiquitinated and degraded during mitotic exit by APC/C-Cdh1. Phosphorylation by NEK2 is essential for chromosome congression in mitosis and for the proper attachment of spindle microtubule to the kinetochore. Phosphorylated by PLK1 and AUKRB. As to expression, widely expressed. Highly expressed in testis. Expressed in lung, small intestine, breast, liver and placenta. Strongly overexpressed in 90% of breast cancers tested.

It localises to the nucleus. It is found in the chromosome. The protein resides in the centromere. The protein localises to the kinetochore. Its subcellular location is the cytoplasm. It localises to the cytoskeleton. It is found in the spindle pole. The protein resides in the microtubule organizing center. The protein localises to the centrosome. Its subcellular location is the nucleus speckle. In terms of biological role, plays a central role in chromosome cohesion during mitosis by preventing premature dissociation of cohesin complex from centromeres after prophase, when most of cohesin complex dissociates from chromosomes arms. May act by preventing phosphorylation of the STAG2 subunit of cohesin complex at the centromere, ensuring cohesin persistence at centromere until cohesin cleavage by ESPL1/separase at anaphase. Essential for proper chromosome segregation during mitosis and this function requires interaction with PPP2R1A. Its phosphorylated form is necessary for chromosome congression and for the proper attachment of spindle microtubule to the kinetochore. Necessary for kinetochore localization of PLK1 and CENPF. May play a role in the tension sensing mechanism of the spindle-assembly checkpoint by regulating PLK1 kinetochore affinity. Isoform 3 plays a role in maintaining centriole cohesion involved in controlling spindle pole integrity. Involved in centromeric enrichment of AUKRB in prometaphase. In Homo sapiens (Human), this protein is Shugoshin 1.